The following is a 218-amino-acid chain: MKIERINDNTVKFFITYVDIEKRGFARDEIWYNRERGEQLFWQMMDEAHEREDISFDGPLWIQVQAFEKGLEVTVTIAKNVMDTEDDSELGSLLRSAIDEARDQQSVLDQLSELDELEAEADAWAPLAMETNDFEAIISLSKRTGDMFSDLDLKLYHYQDRYYLWIDFPDEMEPEDEENALSLLAEYLTFSTQTQPMLEEYGKLILDGDVFAKVRHYF.

The protein belongs to the MecA family. As to quaternary structure, homodimer.

Its function is as follows. Enables the recognition and targeting of unfolded and aggregated proteins to the ClpC protease or to other proteins involved in proteolysis. In Exiguobacterium sp. (strain ATCC BAA-1283 / AT1b), this protein is Adapter protein MecA.